The following is a 312-amino-acid chain: MENGSYTSYFILLGLFNHTRAHQVLFMMVLSIVLTSLFGNSLMILLIHWDHRLHTPMYFLLSQLSLMDVMLVSTTVPKMAADYLTGSKAISRAGCGAQIFFLPTLGGGECFLLAAMAYDRYAAVCHPLRYPTLMSWQLCLRMNLSCWLLGAADGLLQAVATLSFPYCGAHEIDHFFCETPVLVRLACADTSVFENAMYICCVLMLLVPFSLILSSYGLILAAVLHMRSTEARKKAFATCSSHVAVVGLFYGAAIFTYMRPKSHRSTNHDKVVSAFYTMFTPLLNPLIYSVKNSEVKGALTRCMGRCVALSRE.

Over 1–26 (MENGSYTSYFILLGLFNHTRAHQVLF) the chain is Extracellular. 2 N-linked (GlcNAc...) asparagine glycosylation sites follow: asparagine 3 and asparagine 17. Residues 27-47 (MMVLSIVLTSLFGNSLMILLI) form a helical membrane-spanning segment. Residues 48–55 (HWDHRLHT) are Cytoplasmic-facing. Residues 56–76 (PMYFLLSQLSLMDVMLVSTTV) traverse the membrane as a helical segment. Over 77–96 (PKMAADYLTGSKAISRAGCG) the chain is Extracellular. Cysteine 95 and cysteine 177 are oxidised to a cystine. Residues 97–117 (AQIFFLPTLGGGECFLLAAMA) traverse the membrane as a helical segment. The Cytoplasmic portion of the chain corresponds to 118–143 (YDRYAAVCHPLRYPTLMSWQLCLRMN). Residues 144 to 164 (LSCWLLGAADGLLQAVATLSF) form a helical membrane-spanning segment. Over 165 to 201 (PYCGAHEIDHFFCETPVLVRLACADTSVFENAMYICC) the chain is Extracellular. Residues 202–222 (VLMLLVPFSLILSSYGLILAA) traverse the membrane as a helical segment. Over 223–234 (VLHMRSTEARKK) the chain is Cytoplasmic. The chain crosses the membrane as a helical span at residues 235–255 (AFATCSSHVAVVGLFYGAAIF). Residues 256–269 (TYMRPKSHRSTNHD) are Extracellular-facing. Residues 270 to 290 (KVVSAFYTMFTPLLNPLIYSV) traverse the membrane as a helical segment. Topologically, residues 291 to 312 (KNSEVKGALTRCMGRCVALSRE) are cytoplasmic.

The protein belongs to the G-protein coupled receptor 1 family.

The protein localises to the cell membrane. Odorant receptor. This is Olfactory receptor 2T8 (OR2T8) from Homo sapiens (Human).